The chain runs to 182 residues: MFIKDAYNMRALCTALEQSAPDTIINTSKEENNSYYCATAHLLRTDVCSLVNRVGIEPLKSGSILSTLEELWQAVGIIYRLYEWQHVSDIDTNFKKLPNNSDFGLVFSVLDCDIGYVITGKKDSKGNIELYDPKNSLLIENDDIKKYLYDENFHRFCIMLIISKSELEELSRESCDQKCIMG.

The signal sequence occupies residues 1–24; that stretch reads MFIKDAYNMRALCTALEQSAPDTI.

It localises to the secreted. May function as a virulence determinant. The protein is Protein YopQ (yopQ) of Yersinia enterocolitica.